The chain runs to 196 residues: Transmembrane protein 126A (196 aa).

Residues 1 to 34 lie on the Mitochondrial matrix side of the membrane; it reads MESHKPSTSKDDLILNIISRKIKQLPESDRNLLE. Residues 35–55 form a helical membrane-spanning segment; sequence YGSAYIGLNAAFGGLIANSLF. The Mitochondrial intermembrane portion of the chain corresponds to 56 to 57; the sequence is RR. Residues 58–78 traverse the membrane as a helical segment; that stretch reads ILNVTQARLASSLPMAVIPFL. Topologically, residues 79-106 are mitochondrial matrix; the sequence is TANLSYQSLVSLPLSTGDLNCETCTTTR. Residues 107 to 127 form a helical membrane-spanning segment; that stretch reads GALVGLVMGGLYPILLAIPVN. At 128-159 the chain is on the mitochondrial intermembrane side; the sequence is GGLAARYESSPLPQRGNIFNYWITVSKPVFRK. Residues 160 to 176 traverse the membrane as a helical segment; it reads MLFPTLLQTVFASYLGS. The Mitochondrial matrix portion of the chain corresponds to 177-196; the sequence is RQYKLLIKALQLPEPDLEIH.

Belongs to the TMEM126 family. As to quaternary structure, interacts with OXA1L; promoting cotranslational quality control in mitochondria. In terms of tissue distribution, in the retina, significant levels of expression are detected in the ganglion cell layer, the optic nerve head, the outer plexiform layer, and in the outer ellipsoide length of photoreceptor inner segments.

The protein resides in the mitochondrion inner membrane. Protein required for the cotranslational protein quality control in the inner membrane of the mitochondria. Associates with newly synthesized polypeptides and may act as a chaperone that cooperates with OXA1L for the insertion of newly synthesized mitochondrial proteins into the inner membrane. Required for the assembly of the ND4 module of mitochondrial complex I. The polypeptide is Transmembrane protein 126A (Mus musculus (Mouse)).